The following is a 509-amino-acid chain: Glycerol kinase (509 aa).

ADP is bound at residue threonine 12. ATP contacts are provided by threonine 12, threonine 13, and serine 14. Residue threonine 12 participates in sn-glycerol 3-phosphate binding. Arginine 16 serves as a coordination point for ADP. Residues arginine 82, glutamate 83, tyrosine 134, and aspartate 245 each coordinate sn-glycerol 3-phosphate. Positions 82, 83, 134, 245, and 246 each coordinate glycerol. 2 residues coordinate ADP: threonine 267 and glycine 311. Threonine 267, glycine 311, glutamine 315, and glycine 412 together coordinate ATP. Residues glycine 412 and asparagine 416 each contribute to the ADP site.

Belongs to the FGGY kinase family.

The catalysed reaction is glycerol + ATP = sn-glycerol 3-phosphate + ADP + H(+). Its pathway is polyol metabolism; glycerol degradation via glycerol kinase pathway; sn-glycerol 3-phosphate from glycerol: step 1/1. Inhibited by fructose 1,6-bisphosphate (FBP). Key enzyme in the regulation of glycerol uptake and metabolism. Catalyzes the phosphorylation of glycerol to yield sn-glycerol 3-phosphate. In Rhizorhabdus wittichii (strain DSM 6014 / CCUG 31198 / JCM 15750 / NBRC 105917 / EY 4224 / RW1) (Sphingomonas wittichii), this protein is Glycerol kinase.